The primary structure comprises 172 residues: Photosystem I assembly protein Ycf3 (172 aa).

TPR repeat units follow at residues 35–70 (AFTY…EIDP), 74–107 (SYIL…NPFL), and 122–155 (GEQA…TPGN).

It belongs to the Ycf3 family.

The protein resides in the plastid. The protein localises to the chloroplast thylakoid membrane. Essential for the assembly of the photosystem I (PSI) complex. May act as a chaperone-like factor to guide the assembly of the PSI subunits. This is Photosystem I assembly protein Ycf3 from Sorghum bicolor (Sorghum).